We begin with the raw amino-acid sequence, 406 residues long: Methyltransferase cfoD (406 aa).

Positions 270 and 312 each coordinate S-adenosyl-L-methionine. H315 (proton acceptor) is an active-site residue.

Belongs to the class I-like SAM-binding methyltransferase superfamily. Cation-independent O-methyltransferase family.

It functions in the pathway secondary metabolite biosynthesis; flavonoid biosynthesis. Its function is as follows. Methyltransferase; part of the gene cluster that mediates the biosynthesis of chlorflavonin, a fungal flavonoid with acetolactate synthase inhibitory activity. Within the pathway, cfoD is responsible for the methylation at position C3-OH of flavonoid. The pathway begins with the PKS-NRPS hybrid synthetase cfoA that uses benzoic acid or p-hydroxybenzoic acid as a starter unit with four rounds of chain elongation using malonyl-CoA to form the chalcone skeleton. Then, a new type of chalcone isomerase, cfoK, catalyzes the conversion of the chalcone into a flavanone by a histidine-mediated oxa-Michael addition mechanism. The desaturation of flavanone to flavone is catalyzed by a new type of flavone synthase, the flavin mononucleotide (FMN)-dependent oxidoreductase cfoJ. Monooxygenases cfoF, cfoG, and P450 cfoH are responsible for the hydroxylation of the flavonoid skeleton at sites C3, C8, and C2', respectively. Like cfoF, the dehydratase cfoI also plays a role in the hydroxylation of position C3. Methyltransferases cfoB, cfoC, and cfoD then catalyze the methylation of C7-OH, C8-OH, and C3-OH, respectively. Finally, the monooxygenase cfoE is responsible for the chlorination of flavonoid at position C3'. The polypeptide is Methyltransferase cfoD (Aspergillus candidus).